The following is an 83-amino-acid chain: uncharacterized protein (83 aa).

A helical transmembrane segment spans residues I50 to I70.

The protein belongs to the plectrovirus ORF7 family.

It is found in the host membrane. This is an uncharacterized protein from Spiroplasma melliferum (SpV1).